A 223-amino-acid chain; its full sequence is Probable glutathione S-transferase (223 aa).

In terms of domain architecture, GST N-terminal spans 2-81 (AEVKLLGFWY…YIDETFEGPS (80 aa)). Residues serine 12, lysine 39, valine 53, and 65 to 66 (ES) contribute to the glutathione site. In terms of domain architecture, GST C-terminal spans 86-212 (DPYDRALARF…ELLAFFRARF (127 aa)).

This sequence belongs to the GST superfamily. HSP26 family. As to expression, root tip-specific expression.

The catalysed reaction is RX + glutathione = an S-substituted glutathione + a halide anion + H(+). This chain is Probable glutathione S-transferase, found in Nicotiana tabacum (Common tobacco).